The sequence spans 205 residues: Ephrin-A1 (205 aa).

The N-terminal stretch at 1–18 (MEFLWAPLLGLCCSLAAA) is a signal peptide. Residues 19 to 151 (DRHTVFWNSS…RLKVTVSGKI (133 aa)) enclose the Ephrin RBD domain. Asparagine 26 carries N-linked (GlcNAc...) asparagine glycosylation. Cystine bridges form between cysteine 51-cysteine 92 and cysteine 80-cysteine 140. A lipid anchor (GPI-anchor amidated serine) is attached at serine 182. Residues 183-205 (AAPRLFPLAWTVLLLPLLLLQTP) constitute a propeptide, removed in mature form.

Belongs to the ephrin family. As to quaternary structure, monomer. Homodimer. Forms heterodimers with EPHA2. Binds to the receptor tyrosine kinases EPHA2, EPHA3, EPHA4, EPHA5, EPHA6 and EPHA7. Also binds with low affinity to EPHA1. Undergoes proteolysis by a metalloprotease to give rise to a soluble monomeric form. Post-translationally, N-Glycosylation is required for binding to EPHA2 receptor and inducing its internalization. In terms of tissue distribution, brain. Down-regulated in primary glioma tissues compared to the normal tissues. The soluble monomeric form is expressed in the glioblastoma multiforme (GBM) and breast cancer cells (at protein level).

The protein localises to the cell membrane. The protein resides in the secreted. Cell surface GPI-bound ligand for Eph receptors, a family of receptor tyrosine kinases which are crucial for migration, repulsion and adhesion during neuronal, vascular and epithelial development. Binds promiscuously Eph receptors residing on adjacent cells, leading to contact-dependent bidirectional signaling into neighboring cells. Plays an important role in angiogenesis and tumor neovascularization. The recruitment of VAV2, VAV3 and PI3-kinase p85 subunit by phosphorylated EPHA2 is critical for EFNA1-induced RAC1 GTPase activation and vascular endothelial cell migration and assembly. Exerts anti-oncogenic effects in tumor cells through activation and down-regulation of EPHA2. Activates EPHA2 by inducing tyrosine phosphorylation which leads to its internalization and degradation. Acts as a negative regulator in the tumorigenesis of gliomas by down-regulating EPHA2 and FAK. Can evoke collapse of embryonic neuronal growth cone and regulates dendritic spine morphogenesis. This chain is Ephrin-A1 (EFNA1), found in Homo sapiens (Human).